The following is a 372-amino-acid chain: Alanine dehydrogenase 1 (372 aa).

H94 is a catalytic residue. Residue 170–200 (TYVIFGGGVAATNAANVALGLNAKVIIIELN) coordinates NAD(+).

This sequence belongs to the AlaDH/PNT family.

It carries out the reaction L-alanine + NAD(+) + H2O = pyruvate + NH4(+) + NADH + H(+). Its pathway is amino-acid degradation; L-alanine degradation via dehydrogenase pathway; NH(3) and pyruvate from L-alanine: step 1/1. May play a role in cell wall synthesis as L-alanine is an important constituent of the peptidoglycan layer. The polypeptide is Alanine dehydrogenase 1 (ald1) (Staphylococcus aureus (strain NCTC 8325 / PS 47)).